We begin with the raw amino-acid sequence, 131 residues long: uncharacterized protein (131 aa).

Transmembrane regions (helical) follow at residues 7–29, 49–69, 76–98, and 102–124; these read LLKF…SLLY, LVKV…LIAL, LILI…LFTY, and ELSE…FLYL.

The protein localises to the cell membrane. This is an uncharacterized protein from Aquifex aeolicus (strain VF5).